The following is a 509-amino-acid chain: Midnolin (509 aa).

Residues 1-12 (MDQHPSARSCSS) are compositionally biased toward polar residues. The interval 1-27 (MDQHPSARSCSSRGAAPSCESVSGEPP) is disordered. The Ubiquitin-like domain occupies 28–102 (MNLYIHSTTG…LTLVPTVEAG (75 aa)). Disordered stretches follow at residues 172 to 295 (GSSE…NTPL), 370 to 404 (QCTS…ETQP), and 448 to 485 (KRLR…EGSL). The segment covering 176–190 (GTTGLSHGASGSASG) has biased composition (low complexity). Positions 196-209 (HNPHPHHPHQHPHH) are enriched in basic residues. The span at 220 to 231 (AFPPSPSIPSIP) shows a compositional bias: pro residues. Positions 261-285 (PSSACAPSPSSPSPAASCPEASCSA) are enriched in low complexity. Residues 286–295 (KTSGNCNTPL) are compositionally biased toward polar residues. Pro residues predominate over residues 376-386 (SPAPSPPPSPP). Over residues 387 to 400 (HTTGLTGLPTTVPS) the composition is skewed to low complexity.

The protein localises to the nucleus. It is found in the cytoplasm. The protein resides in the cytosol. Its subcellular location is the nucleolus. In terms of biological role, facilitates ubiquitin-independent proteasomal degradation of polycomb protein CBX4. Plays a role in inhibiting the activity of glucokinase GCK and both glucose-induced and basal insulin secretion. The protein is Midnolin (midn) of Danio rerio (Zebrafish).